A 288-amino-acid polypeptide reads, in one-letter code: Diaminopimelate epimerase (288 aa).

Residues Asn14 and Asn67 each coordinate substrate. The active-site Proton donor is the Cys76. Substrate is bound by residues 77-78, Asn166, Asn199, and 217-218; these read GN and ER. The active-site Proton acceptor is Cys226. 227–228 provides a ligand contact to substrate; sequence GT.

The protein belongs to the diaminopimelate epimerase family. Homodimer.

The protein localises to the cytoplasm. It carries out the reaction (2S,6S)-2,6-diaminopimelate = meso-2,6-diaminopimelate. Its pathway is amino-acid biosynthesis; L-lysine biosynthesis via DAP pathway; DL-2,6-diaminopimelate from LL-2,6-diaminopimelate: step 1/1. Functionally, catalyzes the stereoinversion of LL-2,6-diaminopimelate (L,L-DAP) to meso-diaminopimelate (meso-DAP), a precursor of L-lysine and an essential component of the bacterial peptidoglycan. This Bacillus cereus (strain B4264) protein is Diaminopimelate epimerase.